Consider the following 145-residue polypeptide: MIALIQRVSRASVVVDNQTIGAIDKGLLVLLGVEQEDTREKMEKLATKVMSYRVFSDENGKMNLNLEQVGGSLLVVSQFTLAADTGRGLRPSFSGAGTPDQALALYEEFVAFCRAKGVTTETGQFGADMQVSLVNDGPVTFNLQV.

The short motif at 137 to 138 is the Gly-cisPro motif, important for rejection of L-amino acids element; that stretch reads GP.

This sequence belongs to the DTD family. Homodimer.

It is found in the cytoplasm. It carries out the reaction glycyl-tRNA(Ala) + H2O = tRNA(Ala) + glycine + H(+). The enzyme catalyses a D-aminoacyl-tRNA + H2O = a tRNA + a D-alpha-amino acid + H(+). An aminoacyl-tRNA editing enzyme that deacylates mischarged D-aminoacyl-tRNAs. Also deacylates mischarged glycyl-tRNA(Ala), protecting cells against glycine mischarging by AlaRS. Acts via tRNA-based rather than protein-based catalysis; rejects L-amino acids rather than detecting D-amino acids in the active site. By recycling D-aminoacyl-tRNA to D-amino acids and free tRNA molecules, this enzyme counteracts the toxicity associated with the formation of D-aminoacyl-tRNA entities in vivo and helps enforce protein L-homochirality. This is D-aminoacyl-tRNA deacylase from Shewanella baltica (strain OS195).